We begin with the raw amino-acid sequence, 516 residues long: Probable cytochrome P450 9f2 (516 aa).

Cysteine 460 provides a ligand contact to heme.

The protein belongs to the cytochrome P450 family. It depends on heme as a cofactor.

It localises to the endoplasmic reticulum membrane. The protein resides in the microsome membrane. Functionally, may be involved in the metabolism of insect hormones and in the breakdown of synthetic insecticides. This Drosophila melanogaster (Fruit fly) protein is Probable cytochrome P450 9f2 (Cyp9f2).